A 374-amino-acid chain; its full sequence is RNA binding protein fox-1 homolog 3 (374 aa).

Residues 1–29 (MAQPYPPAQYPPPPQNGIPAEYAPPPPHP) show a composition bias toward pro residues. A disordered region spans residues 1-105 (MAQPYPPAQY…QQPKRLHVSN (105 aa)). Residues 49 to 74 (TPAQTHPEQPGTEASTQPIAGTQTVP) are compositionally biased toward polar residues. The 77-residue stretch at 99-175 (KRLHVSNIPF…RKIEVNNATA (77 aa)) folds into the RRM domain. R223 is modified (asymmetric dimethylarginine; alternate). An Omega-N-methylarginine; alternate modification is found at R223. An Asymmetric dimethylarginine modification is found at R319.

Phosphorylated. In terms of tissue distribution, widely expressed in brain, including in cerebral cortex, hippocampus, thalamus, caudate/putamen, cerebellum, as well as in the spinal cord (at protein level). Not expressed in all neuronal cells within a region, in cerebellum, expression is absent in Purkinje cells (at protein level). Expressed in the retina in the ganglion cells and some cells in the inner nuclear layer, but absent from the photoreceptor cells and most cells in the inner nuclear layer (at protein level).

It is found in the nucleus. The protein resides in the cytoplasm. Its function is as follows. Pre-mRNA alternative splicing regulator. Regulates alternative splicing of RBFOX2 to enhance the production of mRNA species that are targeted for nonsense-mediated decay (NMD). The polypeptide is RNA binding protein fox-1 homolog 3 (Rbfox3) (Mus musculus (Mouse)).